Consider the following 427-residue polypeptide: Serine hydroxymethyltransferase (427 aa).

(6S)-5,6,7,8-tetrahydrofolate is bound by residues Leu124 and 128 to 130 (GHL). Position 233 is an N6-(pyridoxal phosphate)lysine (Lys233).

The protein belongs to the SHMT family. In terms of assembly, homodimer. Pyridoxal 5'-phosphate is required as a cofactor.

The protein resides in the cytoplasm. It catalyses the reaction (6R)-5,10-methylene-5,6,7,8-tetrahydrofolate + glycine + H2O = (6S)-5,6,7,8-tetrahydrofolate + L-serine. It functions in the pathway one-carbon metabolism; tetrahydrofolate interconversion. It participates in amino-acid biosynthesis; glycine biosynthesis; glycine from L-serine: step 1/1. Catalyzes the reversible interconversion of serine and glycine with tetrahydrofolate (THF) serving as the one-carbon carrier. This reaction serves as the major source of one-carbon groups required for the biosynthesis of purines, thymidylate, methionine, and other important biomolecules. Also exhibits THF-independent aldolase activity toward beta-hydroxyamino acids, producing glycine and aldehydes, via a retro-aldol mechanism. In Acidothermus cellulolyticus (strain ATCC 43068 / DSM 8971 / 11B), this protein is Serine hydroxymethyltransferase.